The chain runs to 280 residues: NAD(P)H-quinone oxidoreductase subunit K, chloroplastic (280 aa).

[4Fe-4S] cluster contacts are provided by cysteine 65, cysteine 66, cysteine 130, and cysteine 161. The tract at residues leucine 257–alanine 280 is disordered.

It belongs to the complex I 20 kDa subunit family. In terms of assembly, NDH is composed of at least 16 different subunits, 5 of which are encoded in the nucleus. It depends on [4Fe-4S] cluster as a cofactor.

The protein resides in the plastid. Its subcellular location is the chloroplast thylakoid membrane. The catalysed reaction is a plastoquinone + NADH + (n+1) H(+)(in) = a plastoquinol + NAD(+) + n H(+)(out). It catalyses the reaction a plastoquinone + NADPH + (n+1) H(+)(in) = a plastoquinol + NADP(+) + n H(+)(out). NDH shuttles electrons from NAD(P)H:plastoquinone, via FMN and iron-sulfur (Fe-S) centers, to quinones in the photosynthetic chain and possibly in a chloroplast respiratory chain. The immediate electron acceptor for the enzyme in this species is believed to be plastoquinone. Couples the redox reaction to proton translocation, and thus conserves the redox energy in a proton gradient. The chain is NAD(P)H-quinone oxidoreductase subunit K, chloroplastic from Staurastrum punctulatum (Green alga).